Consider the following 42-residue polypeptide: Iota-conotoxin-like R11.16 (42 aa).

Cystine bridges form between cysteine 5/cysteine 19, cysteine 12/cysteine 22, cysteine 18/cysteine 27, and cysteine 21/cysteine 36.

Belongs to the conotoxin I1 superfamily. As to expression, expressed by the venom duct.

It localises to the secreted. Functionally, iota-conotoxins bind to voltage-gated sodium channels (Nav) and act as agonists by shifting the voltage-dependence of activation to more hyperpolarized levels. Produces general excitatory symptoms. The protein is Iota-conotoxin-like R11.16 of Conus radiatus (Rayed cone).